The following is a 431-amino-acid chain: Enolase (431 aa).

Glutamine 163 provides a ligand contact to (2R)-2-phosphoglycerate. Catalysis depends on glutamate 205, which acts as the Proton donor. Aspartate 242, glutamate 288, and aspartate 315 together coordinate Mg(2+). (2R)-2-phosphoglycerate is bound by residues lysine 340, arginine 369, serine 370, and lysine 391. Lysine 340 acts as the Proton acceptor in catalysis.

This sequence belongs to the enolase family. It depends on Mg(2+) as a cofactor.

The protein resides in the cytoplasm. Its subcellular location is the secreted. It localises to the cell surface. The enzyme catalyses (2R)-2-phosphoglycerate = phosphoenolpyruvate + H2O. It participates in carbohydrate degradation; glycolysis; pyruvate from D-glyceraldehyde 3-phosphate: step 4/5. Catalyzes the reversible conversion of 2-phosphoglycerate (2-PG) into phosphoenolpyruvate (PEP). It is essential for the degradation of carbohydrates via glycolysis. This Bacillus cereus (strain B4264) protein is Enolase.